A 598-amino-acid polypeptide reads, in one-letter code: Aspartate--tRNA(Asp/Asn) ligase (598 aa).

Glu173 serves as a coordination point for L-aspartate. The segment at 197 to 200 (QLFK) is aspartate. An L-aspartate-binding site is contributed by Arg219. Residues 219–221 (RDE) and Gln228 contribute to the ATP site. His448 provides a ligand contact to L-aspartate. Glu482 contributes to the ATP binding site. Residue Arg489 participates in L-aspartate binding. 534 to 537 (GWDR) is an ATP binding site. The segment at 560–598 (GYDPLTAAPAPITAQQRKEAGVDAKPETKKAAAGEPAGA) is disordered. Positions 575-591 (QRKEAGVDAKPETKKAA) are enriched in basic and acidic residues.

It belongs to the class-II aminoacyl-tRNA synthetase family. Type 1 subfamily. In terms of assembly, homodimer.

It localises to the cytoplasm. The enzyme catalyses tRNA(Asx) + L-aspartate + ATP = L-aspartyl-tRNA(Asx) + AMP + diphosphate. Aspartyl-tRNA synthetase with relaxed tRNA specificity since it is able to aspartylate not only its cognate tRNA(Asp) but also tRNA(Asn). Reaction proceeds in two steps: L-aspartate is first activated by ATP to form Asp-AMP and then transferred to the acceptor end of tRNA(Asp/Asn). The sequence is that of Aspartate--tRNA(Asp/Asn) ligase from Kineococcus radiotolerans (strain ATCC BAA-149 / DSM 14245 / SRS30216).